We begin with the raw amino-acid sequence, 413 residues long: Arginine biosynthesis bifunctional protein ArgJ (413 aa).

6 residues coordinate substrate: threonine 160, lysine 186, threonine 197, glutamate 284, asparagine 408, and serine 413. The active-site Nucleophile is the threonine 197.

This sequence belongs to the ArgJ family. As to quaternary structure, heterotetramer of two alpha and two beta chains.

Its subcellular location is the cytoplasm. The enzyme catalyses N(2)-acetyl-L-ornithine + L-glutamate = N-acetyl-L-glutamate + L-ornithine. The catalysed reaction is L-glutamate + acetyl-CoA = N-acetyl-L-glutamate + CoA + H(+). The protein operates within amino-acid biosynthesis; L-arginine biosynthesis; L-ornithine and N-acetyl-L-glutamate from L-glutamate and N(2)-acetyl-L-ornithine (cyclic): step 1/1. Its pathway is amino-acid biosynthesis; L-arginine biosynthesis; N(2)-acetyl-L-ornithine from L-glutamate: step 1/4. Its function is as follows. Catalyzes two activities which are involved in the cyclic version of arginine biosynthesis: the synthesis of N-acetylglutamate from glutamate and acetyl-CoA as the acetyl donor, and of ornithine by transacetylation between N(2)-acetylornithine and glutamate. The chain is Arginine biosynthesis bifunctional protein ArgJ from Burkholderia pseudomallei (strain K96243).